The sequence spans 712 residues: Translation initiation factor eIF2B subunit epsilon (712 aa).

Positions 1–20 (MAGKKGQKKSGLGNHGKNSD) are disordered. Phosphoserine is present on residues serine 478, serine 481, serine 507, serine 525, serine 538, and serine 707. A W2 domain is found at 539–710 (EFEDEDFEKE…QNADEESSSE (172 aa)).

The protein belongs to the eIF-2B gamma/epsilon subunits family. Component of the translation initiation factor 2B (eIF2B) complex which is a heterodecamer of two sets of five different subunits: alpha, beta, gamma, delta and epsilon. Subunits alpha, beta and delta comprise a regulatory subcomplex and subunits epsilon and gamma comprise a catalytic subcomplex. Within the complex, the hexameric regulatory complex resides at the center, with the two heterodimeric catalytic subcomplexes bound on opposite sides.

The protein localises to the cytoplasm. Its subcellular location is the cytosol. Its function is as follows. Acts as a catalytic component of the translation initiation factor 2B (eIF2B) complex, which catalyzes the exchange of GDP for GTP on eukaryotic initiation factor 2 (eIF2) and is regulated by phosphorylated eIF2. Its guanine nucleotide exchange factor activity is repressed when bound to eIF2 complex phosphorylated on the alpha subunit, thereby limiting the amount of methionyl-initiator methionine tRNA available to the ribosome and consequently global translation is repressed. It activates the synthesis of GCN4 in yeast under amino acid starvation conditions by suppressing the inhibitory effects of multiple AUG codons present in the leader of GCN4 mRNA. It may promote either repression or activation of GCN4 expression depending on amino acid availability. GCD6 and GCD7 repress GCN4 expression at the translational level by ensuring that ribosomes which have translated UORF1 will reinitiate at UORF2, -3, or -4 and thus fail to reach the GCN4 start site. The polypeptide is Translation initiation factor eIF2B subunit epsilon (GCD6) (Saccharomyces cerevisiae (strain ATCC 204508 / S288c) (Baker's yeast)).